Here is a 354-residue protein sequence, read N- to C-terminus: MGSLEKERTTTGWAARDPSGVLSPYTYSLRNTGPEDLYIKVLSCGICHSDIHQIKNDLGMSHYPMVPGHEVVGEVLEVGSEVTKYRVGDRVGTGIVVGCCRSCSPCNSDQEQYCNKKIWNYNDVYTDGKPTQGGFAGEIVVGERFVVKIPDGLESEQAAPLMCAGVTVYRPLVRFGLKQSGLRGGILGLGGVGHMGVKIAKAMGHHVTVISSSDKKRTEALEHLGADAYLVSSDENGMKEATDSLDYVFDTIPVVHPLEPYLALLKLDGKLILTGVINAPLQFISPMVMLESITGSFIGSMKETEEMLEFCKEKGLTSQIEVIKMDYVNTALERLEKNDVRYRFVVDVVGSKLD.

Position 47 (C47) interacts with Zn(2+). Residue S49 participates in NADP(+) binding. H69, E70, C100, C103, C106, C114, and C163 together coordinate Zn(2+). Residues T167, 188-193 (GLGGVG), 211-216 (SSSDKK), T251, G275, and 296-298 (SFI) contribute to the NADP(+) site.

This sequence belongs to the zinc-containing alcohol dehydrogenase family. In terms of assembly, homodimer. The cofactor is Zn(2+).

The catalysed reaction is (E)-cinnamyl alcohol + NADP(+) = (E)-cinnamaldehyde + NADPH + H(+). It carries out the reaction (E)-coniferol + NADP(+) = (E)-coniferaldehyde + NADPH + H(+). The enzyme catalyses (E)-sinapyl alcohol + NADP(+) = (E)-sinapaldehyde + NADPH + H(+). It catalyses the reaction (E)-4-coumaroyl alcohol + NADP(+) = (E)-4-coumaraldehyde + NADPH + H(+). The catalysed reaction is (E)-caffeyl alcohol + NADP(+) = (E)-caffeyl aldehyde + NADPH + H(+). The protein operates within aromatic compound metabolism; phenylpropanoid biosynthesis. Functionally, involved in lignin biosynthesis. Catalyzes the final step specific for the production of lignin monomers. Catalyzes the NADPH-dependent reduction of coniferaldehyde, 5-hydroxyconiferaldehyde, sinapaldehyde, 4-coumaraldehyde and caffeyl aldehyde to their respective alcohols. This Eucalyptus gunnii (Cider gum) protein is Probable cinnamyl alcohol dehydrogenase 1 (CAD1).